A 313-amino-acid chain; its full sequence is Proline-rich protein 3 (313 aa).

A signal peptide spans 1-22; it reads MAITRSSLAICLILSLVTITTA. Positions 27–312 are 35 X 5 AA approximate repeats; the sequence is PSSPPVYKSP…GPKAAPATPK (286 aa). 35 consecutive repeat copies span residues 30 to 34, 35 to 39, 40 to 43, 44 to 48, 49 to 53, 54 to 57, 58 to 62, 64 to 67, 68 to 72, 73 to 77, 82 to 86, 87 to 91, 92 to 96, 97 to 101, 102 to 105, 106 to 110, 111 to 115, 116 to 120, 121 to 125, 126 to 131, 132 to 136, 137 to 141, 142 to 146, 147 to 150, 151 to 155, 157 to 163, 164 to 168, 169 to 174, 175 to 181, 182 to 186, 187 to 229, 258 to 262, 266 to 270, 298 to 302, and 308 to 312.

This sequence belongs to the plant proline-rich protein superfamily. ENOD12 family. Exclusively expressed in roots, particularly in root hairs-containing regions, and especially in root hairs.

It is found in the secreted. The protein localises to the cell wall. May contribute to cell wall structure in root hairs. The chain is Proline-rich protein 3 (PRP3) from Arabidopsis thaliana (Mouse-ear cress).